A 423-amino-acid chain; its full sequence is ATP-citrate synthase alpha chain protein 1 (423 aa).

Residues Asn-343, Thr-345, and Arg-376 each coordinate citrate.

It belongs to the succinate/malate CoA ligase beta subunit family. Heterooctamer of 4 alpha and 4 beta chains. As to expression, expressed in trichomes, epidermal leaf cells, anther tapetal cells, stigma and in young vascular bundles of expanding leaves, cotyledons, roots, pedicel of flowers and siliques.

The protein resides in the cytoplasm. The protein localises to the cytosol. The enzyme catalyses oxaloacetate + acetyl-CoA + ADP + phosphate = citrate + ATP + CoA. ATP citrate-lyase is the primary enzyme responsible for the synthesis of cytosolic acetyl-CoA, used for the elongation of fatty acids and biosynthesis of isoprenoids, flavonoids and malonated derivatives. May supply substrate to the cytosolic acetyl-CoA carboxylase, which generates the malonyl-CoA used for the synthesis of a multitude of compounds, including very long chain fatty acids and flavonoids. Required for normal growth and development and elongation of C18 fatty acids to C20 to C24 fatty acids in seeds. In contrast to all known animal ACL enzymes having a homomeric structure, plant ACLs are composed of alpha and beta chains. This chain is ATP-citrate synthase alpha chain protein 1 (ACLA-1), found in Arabidopsis thaliana (Mouse-ear cress).